Reading from the N-terminus, the 460-residue chain is tRNA modification GTPase MnmE (460 aa).

(6S)-5-formyl-5,6,7,8-tetrahydrofolate contacts are provided by arginine 29, glutamate 91, and lysine 132. The TrmE-type G domain occupies 227-383 (GISIALIGKT…LIDTIIKKCG (157 aa)). A K(+)-binding site is contributed by asparagine 237. GTP contacts are provided by residues 237 to 242 (NVGKSS), 256 to 262 (TNIPGTT), and 281 to 284 (DTAG). Position 241 (serine 241) interacts with Mg(2+). K(+) is bound by residues threonine 256, isoleucine 258, and threonine 261. A Mg(2+)-binding site is contributed by threonine 262. Residue lysine 460 coordinates (6S)-5-formyl-5,6,7,8-tetrahydrofolate.

This sequence belongs to the TRAFAC class TrmE-Era-EngA-EngB-Septin-like GTPase superfamily. TrmE GTPase family. As to quaternary structure, homodimer. Heterotetramer of two MnmE and two MnmG subunits. The cofactor is K(+).

The protein resides in the cytoplasm. Its function is as follows. Exhibits a very high intrinsic GTPase hydrolysis rate. Involved in the addition of a carboxymethylaminomethyl (cmnm) group at the wobble position (U34) of certain tRNAs, forming tRNA-cmnm(5)s(2)U34. The polypeptide is tRNA modification GTPase MnmE (Prochlorococcus marinus (strain MIT 9215)).